A 425-amino-acid chain; its full sequence is Elongation factor 1-alpha (425 aa).

A tr-type G domain is found at 5–221 (KPHINLAVIG…DELEVPDKPT (217 aa)). The interval 14-21 (GHIDHGKS) is G1. Residue 14–21 (GHIDHGKS) participates in GTP binding. Mg(2+) is bound at residue S21. The segment at 70-74 (GITID) is G2. The interval 91–94 (DCPG) is G3. Residues 91 to 95 (DCPGH) and 146 to 149 (NKMD) each bind GTP. Residues 146 to 149 (NKMD) form a G4 region. A G5 region spans residues 185-187 (SAF).

The protein belongs to the TRAFAC class translation factor GTPase superfamily. Classic translation factor GTPase family. EF-Tu/EF-1A subfamily.

It localises to the cytoplasm. The catalysed reaction is GTP + H2O = GDP + phosphate + H(+). In terms of biological role, GTP hydrolase that promotes the GTP-dependent binding of aminoacyl-tRNA to the A-site of ribosomes during protein biosynthesis. This is Elongation factor 1-alpha from Methanospirillum hungatei JF-1 (strain ATCC 27890 / DSM 864 / NBRC 100397 / JF-1).